Here is a 317-residue protein sequence, read N- to C-terminus: Putative GTPase PH0274 (317 aa).

GTP is bound by residues 54–62 (GPPGAGKST), Asp-196, and 231–233 (VGT).

It belongs to the SIMIBI class G3E GTPase family. ArgK/MeaB subfamily.

May have GTPase activity. May also bind and hydrolyze ATP. May function as chaperone. The polypeptide is Putative GTPase PH0274 (Pyrococcus horikoshii (strain ATCC 700860 / DSM 12428 / JCM 9974 / NBRC 100139 / OT-3)).